The chain runs to 442 residues: Glutamate synthase large subunit-like protein (442 aa).

The tract at residues 108-133 (LGRGATASGTSTTTGDGGMTDEERGH) is disordered. The segment covering 109–121 (GRGATASGTSTTT) has biased composition (low complexity).

This sequence belongs to the glutamate synthase family.

The sequence is that of Glutamate synthase large subunit-like protein (glxD) from Rhizobium meliloti (strain 1021) (Ensifer meliloti).